The chain runs to 396 residues: Purine ribonucleoside efflux pump NepI (396 aa).

The Cytoplasmic portion of the chain corresponds to 1–21 (MSEFIAENRGADAITRPNWSA). A helical membrane pass occupies residues 22-42 (VFSVAFCVACLIIVEFLPVSL). The Periplasmic segment spans residues 43–54 (LTPMAQDLGISE). The helical transmembrane segment at 55–75 (GVAGQSVTVTAFVAMFASLFI) threads the bilayer. Topologically, residues 76–85 (TQTIQATDRR) are cytoplasmic. Residues 86–106 (NVVILFAVLLTLSCLLVSFAN) form a helical membrane-spanning segment. Serine 107 is a topological domain (periplasmic). A helical transmembrane segment spans residues 108 to 128 (FSLLLIGRACLGLALGGFWAM). Over 129–147 (SASLTMRLVPPRTVPKALS) the chain is Cytoplasmic. Residues 148-168 (VIFGAVSIALVIAAPLGSFLG) traverse the membrane as a helical segment. Topologically, residues 169-175 (ELIGWRN) are periplasmic. The helical transmembrane segment at 176 to 196 (VFNAAAVMGVLCIFWIIKSLP) threads the bilayer. At 197–215 (SLPGEPSHQKQNTFRLLQR) the chain is on the cytoplasmic side. Residues 216-236 (PGVMAGMIAIFMSFAGQFAFF) traverse the membrane as a helical segment. Topologically, residues 237–255 (TYIRPVYMNLAGFSVDGLT) are periplasmic. Residues 256-276 (LVLLSFGIASFIGTSLSSFIL) form a helical membrane-spanning segment. Over 277–281 (KRSVK) the chain is Cytoplasmic. Residues 282–302 (LALAGAPLILAVSALVLTLWG) form a helical membrane-spanning segment. Over 303-305 (SDK) the chain is Periplasmic. Residues 306-326 (IVATGVAIIWGLTFALVPVGW) form a helical membrane-spanning segment. Residues 327-343 (STWITRSLADQAEKAGS) lie on the Cytoplasmic side of the membrane. The helical transmembrane segment at 344 to 364 (IQVAVIQLANTCGAAIGGYAL) threads the bilayer. Topologically, residues 365 to 366 (DN) are periplasmic. A helical membrane pass occupies residues 367–387 (IGLTSPLMFSGTLMLLTALLV). The Cytoplasmic portion of the chain corresponds to 388–396 (TAKVKMKKS).

This sequence belongs to the major facilitator superfamily. DHA1 family. NepI (TC 2.A.1.2.26) subfamily.

It localises to the cell inner membrane. It carries out the reaction inosine(in) + H(+)(out) = inosine(out) + H(+)(in). It catalyses the reaction guanosine(in) + H(+)(out) = guanosine(out) + H(+)(in). Involved in the efflux of purine ribonucleosides, such as inosine and guanosine. This Shigella sonnei (strain Ss046) protein is Purine ribonucleoside efflux pump NepI.